The following is a 152-amino-acid chain: Lipoprotein signal peptidase (152 aa).

Transmembrane regions (helical) follow at residues 55–75 and 85–105; these read NKMW…VFYM and LGIS…DRVF. Residues aspartate 111 and aspartate 129 contribute to the active site. Residues 124–144 traverse the membrane as a helical segment; the sequence is VFNIADSALCIGVVLIIIQTV.

It belongs to the peptidase A8 family.

It localises to the cell membrane. It catalyses the reaction Release of signal peptides from bacterial membrane prolipoproteins. Hydrolyzes -Xaa-Yaa-Zaa-|-(S,diacylglyceryl)Cys-, in which Xaa is hydrophobic (preferably Leu), and Yaa (Ala or Ser) and Zaa (Gly or Ala) have small, neutral side chains.. It participates in protein modification; lipoprotein biosynthesis (signal peptide cleavage). In terms of biological role, this protein specifically catalyzes the removal of signal peptides from prolipoproteins. The polypeptide is Lipoprotein signal peptidase (Bacillus mycoides (strain KBAB4) (Bacillus weihenstephanensis)).